The sequence spans 437 residues: tRNA wybutosine-synthesizing protein 2 homolog (437 aa).

S-adenosyl-L-methionine is bound by residues serine 208, lysine 215, glutamate 255, and aspartate 283–asparagine 284. Residues serine 331–asparagine 344 show a composition bias toward polar residues. Residues serine 331 to serine 374 form a disordered region.

Belongs to the class I-like SAM-binding methyltransferase superfamily. TRM5/TYW2 family.

The catalysed reaction is 4-demethylwyosine(37) in tRNA(Phe) + S-adenosyl-L-methionine = 4-demethyl-7-[(3S)-3-amino-3-carboxypropyl]wyosine(37) in tRNA(Phe) + S-methyl-5'-thioadenosine + H(+). It functions in the pathway tRNA modification; wybutosine-tRNA(Phe) biosynthesis. In terms of biological role, S-adenosyl-L-methionine-dependent transferase that acts as a component of the wybutosine biosynthesis pathway. Wybutosine is a hyper modified guanosine with a tricyclic base found at the 3'-position adjacent to the anticodon of eukaryotic phenylalanine tRNA. Catalyzes the transfer of the alpha-amino-alpha-carboxypropyl (acp) group from S-adenosyl-L-methionine to the C-7 position of 4-demethylwyosine (imG-14) to produce wybutosine-86. This Rattus norvegicus (Rat) protein is tRNA wybutosine-synthesizing protein 2 homolog (Trmt12).